Consider the following 1159-residue polypeptide: Ferroxidase HEPHL1 (1159 aa).

Positions 1–23 (MFLKQPGGCILLQFLGLLGLVGA) are cleaved as a signal peptide. Plastocyanin-like domains lie at 24–206 (VTRT…LLVC), 217–365 (MRTD…VGNC), 378–560 (QRRY…LLVC), 570–718 (TQKG…ISSC), 730–906 (MLRT…LITC), and 914–1092 (KGRR…VPSQ). Topologically, residues 24–1114 (VTRTYYIGIV…KNLRPRGAKA (1091 aa)) are extracellular. H126 and H128 together coordinate Cu cation. The N-linked (GlcNAc...) asparagine glycan is linked to N160. Cysteines 180 and 206 form a disulfide. 2 residues coordinate Cu cation: H186 and H188. Residue N235 is glycosylated (N-linked (GlcNAc...) asparagine). C284 and C365 are joined by a disulfide. Residues H303, C346, and H351 each coordinate Cu cation. An N-linked (GlcNAc...) asparagine glycan is attached at N406. C534 and C560 form a disulfide bridge. Residue N588 is glycosylated (N-linked (GlcNAc...) asparagine). C637 and C718 are oxidised to a cystine. Cu cation contacts are provided by H656, C699, H704, and M709. N771 carries an N-linked (GlcNAc...) asparagine glycan. A disulfide bridge connects residues C880 and C906. N934 is a glycosylation site (N-linked (GlcNAc...) asparagine). 8 residues coordinate Cu cation: H1002, H1005, H1007, H1047, C1048, H1049, H1053, and M1058. Residues 1115–1135 (ALVILFILGLLLLVATVVLAL) form a helical membrane-spanning segment. Residues 1136–1159 (RLRSSRRQMAYREVQSCALPTDAL) lie on the Cytoplasmic side of the membrane.

This sequence belongs to the multicopper oxidase family. Cu cation serves as cofactor.

It localises to the membrane. The enzyme catalyses 4 Fe(2+) + O2 + 4 H(+) = 4 Fe(3+) + 2 H2O. Functionally, is a copper-binding glycoprotein with ferroxidase activity. It oxidizes Fe(2+) to Fe(3+) without releasing radical oxygen species. May be involved in the regulation of intracellular iron content. This Mus musculus (Mouse) protein is Ferroxidase HEPHL1 (Hephl1).